A 278-amino-acid polypeptide reads, in one-letter code: Pantothenate synthetase (278 aa).

ATP is bound at residue 30–37 (MGFLHEGH). His37 acts as the Proton donor in catalysis. (R)-pantoate is bound at residue Gln61. Gln61 is a binding site for beta-alanine. 147 to 150 (GQKD) provides a ligand contact to ATP. Residue Gln153 participates in (R)-pantoate binding. Residues Val176 and 184–187 (LSSR) contribute to the ATP site.

It belongs to the pantothenate synthetase family. In terms of assembly, homodimer.

It is found in the cytoplasm. It catalyses the reaction (R)-pantoate + beta-alanine + ATP = (R)-pantothenate + AMP + diphosphate + H(+). It functions in the pathway cofactor biosynthesis; (R)-pantothenate biosynthesis; (R)-pantothenate from (R)-pantoate and beta-alanine: step 1/1. Its function is as follows. Catalyzes the condensation of pantoate with beta-alanine in an ATP-dependent reaction via a pantoyl-adenylate intermediate. The polypeptide is Pantothenate synthetase (Thermosipho africanus (strain TCF52B)).